Consider the following 397-residue polypeptide: MAKAKFERNKPHCNIGTIGHVDHGKTTLTAAITKVLAEAGGGNTFVDYANIDKAPEERERGITISTSHVEYETETRHYAHVDCPGHADYVKNMITGAAQMDGAILVVSAADGPMPQTREHILLARQVGVPALVVFMNKVDQVDDPELLELVEMEIRELLSSYDFPGDDIPIVKGSALAALEDKNPEIGKEAILSLMAAVDEYIPQPERPLDKSFLMPIEDVFSISGRGTVVTGRVETGIVKVGEEVEIVGLRDTKKTTVTGVEMFRKLLDQGQAGDNIGALLRGTARTEVERGQVLAKPGSITPHTEFKAEVYVLSKDEGGRHTPFFANYRPQFYFRTTDVTGEITLPEDVEMVMPGDNIAFGVKLIAPIAMDPGLRFAIREGGRTVGAGVVSSIIK.

The tr-type G domain maps to 10–207; it reads KPHCNIGTIG…AVDEYIPQPE (198 aa). Positions 19-26 are G1; the sequence is GHVDHGKT. 19–26 serves as a coordination point for GTP; it reads GHVDHGKT. Position 26 (threonine 26) interacts with Mg(2+). The tract at residues 61–65 is G2; it reads GITIS. Residues 82–85 form a G3 region; that stretch reads DCPG. Residues 82–86 and 137–140 each bind GTP; these read DCPGH and NKVD. A G4 region spans residues 137–140; that stretch reads NKVD. The G5 stretch occupies residues 175-177; it reads SAL.

The protein belongs to the TRAFAC class translation factor GTPase superfamily. Classic translation factor GTPase family. EF-Tu/EF-1A subfamily. Monomer.

Its subcellular location is the cytoplasm. It carries out the reaction GTP + H2O = GDP + phosphate + H(+). GTP hydrolase that promotes the GTP-dependent binding of aminoacyl-tRNA to the A-site of ribosomes during protein biosynthesis. The protein is Elongation factor Tu of Zymomonas mobilis subsp. mobilis (strain ATCC 31821 / ZM4 / CP4).